Here is a 500-residue protein sequence, read N- to C-terminus: Cytochrome P450 2D3 (500 aa).

Cysteine 446 provides a ligand contact to heme.

It belongs to the cytochrome P450 family. Requires heme as cofactor.

It is found in the endoplasmic reticulum membrane. It localises to the microsome membrane. The enzyme catalyses an organic molecule + reduced [NADPH--hemoprotein reductase] + O2 = an alcohol + oxidized [NADPH--hemoprotein reductase] + H2O + H(+). Its function is as follows. Cytochromes P450 are a group of heme-thiolate monooxygenases. In liver microsomes, this enzyme is involved in an NADPH-dependent electron transport pathway. It oxidizes a variety of structurally unrelated compounds, including steroids, fatty acids, and xenobiotics. The chain is Cytochrome P450 2D3 (Cyp2d3) from Rattus norvegicus (Rat).